A 353-amino-acid polypeptide reads, in one-letter code: Forkhead box protein I3-A (353 aa).

The fork-head DNA-binding region spans Arg-116–Lys-210. Positions Asp-201 to Cys-255 are disordered. The short motif at Arg-206–Lys-212 is the Nuclear localization signal element. Residues Ser-213–Lys-222 are compositionally biased toward basic and acidic residues. A compositionally biased stretch (polar residues) spans Gly-226–Gln-252.

Expressed in ionocyte precursors.

The protein resides in the nucleus. Transcription factor required for epithelial cell differentiation. Involved in specification of skin ionocytes from epidermal precursors. This chain is Forkhead box protein I3-A, found in Danio rerio (Zebrafish).